A 154-amino-acid polypeptide reads, in one-letter code: Large ribosomal subunit protein uL22 (154 aa).

It belongs to the universal ribosomal protein uL22 family. Part of the 50S ribosomal subunit.

This protein binds specifically to 23S rRNA. It makes multiple contacts with different domains of the 23S rRNA in the assembled 50S subunit and ribosome. Functionally, the globular domain of the protein is located near the polypeptide exit tunnel on the outside of the subunit, while an extended beta-hairpin is found that lines the wall of the exit tunnel in the center of the 70S ribosome. In Methanoregula boonei (strain DSM 21154 / JCM 14090 / 6A8), this protein is Large ribosomal subunit protein uL22.